Consider the following 598-residue polypeptide: Mitogen-activated protein kinase 19 (598 aa).

The Protein kinase domain maps to 25–316; it reads YRILEVIGKG…AAEALADPYF (292 aa). Residues 31–39 and lysine 54 contribute to the ATP site; that span reads IGKGSYGVV. Aspartate 151 acts as the Proton acceptor in catalysis. Threonine 187 carries the phosphothreonine modification. Positions 187-189 match the TXY motif; that stretch reads TDY. Tyrosine 189 carries the phosphotyrosine modification. The residue at position 192 (threonine 192) is a Phosphothreonine. The segment at 396–486 is disordered; that stretch reads GKSGPVIPPD…VTYENDRNLK (91 aa). A compositionally biased stretch (low complexity) spans 414–425; that stretch reads SAVHSSAVNSNA.

The protein belongs to the protein kinase superfamily. CMGC Ser/Thr protein kinase family. MAP kinase subfamily. In terms of processing, dually phosphorylated on Thr-187 and Tyr-189, which activates the enzyme.

The catalysed reaction is L-seryl-[protein] + ATP = O-phospho-L-seryl-[protein] + ADP + H(+). It catalyses the reaction L-threonyl-[protein] + ATP = O-phospho-L-threonyl-[protein] + ADP + H(+). Activated by threonine and tyrosine phosphorylation. The polypeptide is Mitogen-activated protein kinase 19 (MPK19) (Arabidopsis thaliana (Mouse-ear cress)).